We begin with the raw amino-acid sequence, 175 residues long: Adenine phosphoribosyltransferase (175 aa).

The protein belongs to the purine/pyrimidine phosphoribosyltransferase family. In terms of assembly, homodimer.

The protein resides in the cytoplasm. The catalysed reaction is AMP + diphosphate = 5-phospho-alpha-D-ribose 1-diphosphate + adenine. It participates in purine metabolism; AMP biosynthesis via salvage pathway; AMP from adenine: step 1/1. Functionally, catalyzes a salvage reaction resulting in the formation of AMP, that is energically less costly than de novo synthesis. This is Adenine phosphoribosyltransferase from Lacticaseibacillus paracasei (strain ATCC 334 / BCRC 17002 / CCUG 31169 / CIP 107868 / KCTC 3260 / NRRL B-441) (Lactobacillus paracasei).